The primary structure comprises 240 residues: Regulatory protein RecX (240 aa).

Belongs to the RecX family.

Its subcellular location is the cytoplasm. In terms of biological role, modulates RecA activity. The chain is Regulatory protein RecX from Lacticaseibacillus paracasei (strain ATCC 334 / BCRC 17002 / CCUG 31169 / CIP 107868 / KCTC 3260 / NRRL B-441) (Lactobacillus paracasei).